The chain runs to 265 residues: MNKDVSLGQPIVRYEDGKLFNTTDQYVTEFPLTIMVNGEEFATVICSPTNLEELVIGFLASEGAILKRDELKSVLIDDSKGFAHVELNKDLGDRFQYSTKRMIASCCGKSREFYFQNDAAIAKTSMSKITLTPMQIINMMTRLQSASHIYQETGGLHNAAISDGLTFFVHRQDIGRHNALDKLYGFCIQRHITVRDKVLIFSGRISSEILIKAAKIGVGVILSKSAPTTLAVTLANDLNITAVGFIRNGGFNIYSHPERIIDSEQ.

The active-site Cysteine persulfide intermediate is the cysteine 107.

It belongs to the FdhD family.

The protein resides in the cytoplasm. Functionally, required for formate dehydrogenase (FDH) activity. Acts as a sulfur carrier protein that transfers sulfur from IscS to the molybdenum cofactor prior to its insertion into FDH. This Staphylococcus aureus (strain NCTC 8325 / PS 47) protein is Sulfur carrier protein FdhD.